The following is a 182-amino-acid chain: Mitochondrial FAD-linked sulfhydryl oxidase erv1 (182 aa).

The region spanning Arg75 to Ala177 is the ERV/ALR sulfhydryl oxidase domain. FAD-binding positions include Glu81 to Trp87, His91, and Tyr120. Cystine bridges form between Cys122–Cys125 and Cys153–Cys170. Residues Cys153–Lys165 and Lys176–Ala177 each bind FAD.

The cofactor is FAD.

The protein localises to the mitochondrion intermembrane space. It carries out the reaction 2 R'C(R)SH + O2 = R'C(R)S-S(R)CR' + H2O2. In terms of biological role, FAD-dependent sulfhydryl oxidase that catalyzes disulfide bond formation. Required for the import and folding of small cysteine-containing proteins in the mitochondrial intermembrane space (IMS). This Schizosaccharomyces pombe (strain 972 / ATCC 24843) (Fission yeast) protein is Mitochondrial FAD-linked sulfhydryl oxidase erv1 (erv1).